A 772-amino-acid polypeptide reads, in one-letter code: 5-methyltetrahydropteroyltriglutamate--homocysteine methyltransferase (772 aa).

5-methyltetrahydropteroyltri-L-glutamate contacts are provided by residues 24 to 27 (RELK) and Lys120. The tract at residues 404–428 (DPAVRSRTAATTDADARRSGPYPER) is disordered. Residues 446 to 448 (IGS) and Glu499 contribute to the L-homocysteine site. Residues 446-448 (IGS) and Glu499 each bind L-methionine. Trp576 contributes to the 5-methyltetrahydropteroyltri-L-glutamate binding site. Asp614 provides a ligand contact to L-homocysteine. Residue Asp614 coordinates L-methionine. Residue Glu620 coordinates 5-methyltetrahydropteroyltri-L-glutamate. The Zn(2+) site is built by His656, Cys658, and Glu680. His709 (proton donor) is an active-site residue. Position 741 (Cys741) interacts with Zn(2+).

Belongs to the vitamin-B12 independent methionine synthase family. It depends on Zn(2+) as a cofactor.

The enzyme catalyses 5-methyltetrahydropteroyltri-L-glutamate + L-homocysteine = tetrahydropteroyltri-L-glutamate + L-methionine. It functions in the pathway amino-acid biosynthesis; L-methionine biosynthesis via de novo pathway; L-methionine from L-homocysteine (MetE route): step 1/1. Catalyzes the transfer of a methyl group from 5-methyltetrahydrofolate to homocysteine resulting in methionine formation. The polypeptide is 5-methyltetrahydropteroyltriglutamate--homocysteine methyltransferase (Streptomyces avermitilis (strain ATCC 31267 / DSM 46492 / JCM 5070 / NBRC 14893 / NCIMB 12804 / NRRL 8165 / MA-4680)).